Here is a 394-residue protein sequence, read N- to C-terminus: MKREVYLDYAATTPLRKEVYEAMKPFLKEKFGNPSSIHHFGRETRTAIEEAREKIAKAIGAKSDEIIFTSGGTESNNMAIKGVAFALSTKGKHIITSKVEHHAVLEPCHFLEKLGFEITYLPVDREGFVDPDDLKKALRKDTILISIMHANNEIGTIEPIQELSKIAKEYDIYFHTDAVQTVGHIPVNVDELGVDLLSISAHKFYGPKGVGALYIRKGTKIHPLIHGGSQENNKRAGTENVAGIIGMGKAIELAILEMDKEIERLTELRDYFIREVEKRISDVYLNGPRSNRLPNNINFSFAYVEGESILLHLDLEGVEVSTGSACSSSSLEPSHVLSAINVPIELAHGSIRFTLGLYTTKEDLNYTLDVLERIIEKLRTISPYKQEWKINKKS.

Pyridoxal 5'-phosphate contacts are provided by residues 72–73, Asn-152, Gln-180, and 200–202; these read GT and SAH. Lys-203 carries the post-translational modification N6-(pyridoxal phosphate)lysine. Thr-238 is a pyridoxal 5'-phosphate binding site. Catalysis depends on Cys-326, which acts as the Cysteine persulfide intermediate. Cys-326 provides a ligand contact to [2Fe-2S] cluster.

This sequence belongs to the class-V pyridoxal-phosphate-dependent aminotransferase family. NifS/IscS subfamily. Homodimer. Forms a heterotetramer with IscU, interacts with other sulfur acceptors. Requires pyridoxal 5'-phosphate as cofactor.

The protein localises to the cytoplasm. The catalysed reaction is (sulfur carrier)-H + L-cysteine = (sulfur carrier)-SH + L-alanine. It functions in the pathway cofactor biosynthesis; iron-sulfur cluster biosynthesis. Its function is as follows. Master enzyme that delivers sulfur to a number of partners involved in Fe-S cluster assembly, tRNA modification or cofactor biosynthesis. Catalyzes the removal of elemental sulfur atoms from cysteine to produce alanine. Functions as a sulfur delivery protein for Fe-S cluster synthesis onto IscU, an Fe-S scaffold assembly protein, as well as other S acceptor proteins. The protein is Cysteine desulfurase IscS of Dictyoglomus turgidum (strain DSM 6724 / Z-1310).